The following is a 342-amino-acid chain: Methionyl-tRNA formyltransferase (342 aa).

Residue 119 to 122 coordinates (6S)-5,6,7,8-tetrahydrofolate; sequence SILP.

Belongs to the Fmt family.

It catalyses the reaction L-methionyl-tRNA(fMet) + (6R)-10-formyltetrahydrofolate = N-formyl-L-methionyl-tRNA(fMet) + (6S)-5,6,7,8-tetrahydrofolate + H(+). Functionally, attaches a formyl group to the free amino group of methionyl-tRNA(fMet). The formyl group appears to play a dual role in the initiator identity of N-formylmethionyl-tRNA by promoting its recognition by IF2 and preventing the misappropriation of this tRNA by the elongation apparatus. The sequence is that of Methionyl-tRNA formyltransferase from Nostoc sp. (strain PCC 7120 / SAG 25.82 / UTEX 2576).